Here is a 471-residue protein sequence, read N- to C-terminus: Anthranilate 1,2-dioxygenase large subunit (471 aa).

Positions 52-160 constitute a Rieske domain; it reads IYACHESEIP…IASYRGFVFV (109 aa). Residues C93, H95, C113, and H116 each contribute to the [2Fe-2S] cluster site. Fe cation is bound by residues H220, H225, and D379.

Belongs to the bacterial ring-hydroxylating dioxygenase alpha subunit family. In terms of assembly, the anthranilate dioxygenase (AntDO) multicomponent enzyme system is composed of an oxygenase component and a NADH:acceptor reductase component (AntC). The oxygenase component is a heterohexamer of 3 large (AntA) and 3 small (AntB) subunits. The cofactor is Fe cation. [2Fe-2S] cluster serves as cofactor.

The catalysed reaction is anthranilate + NADH + O2 + 3 H(+) = catechol + NH4(+) + CO2 + NAD(+). The enzyme catalyses anthranilate + NADPH + O2 + 3 H(+) = catechol + NH4(+) + CO2 + NADP(+). Its pathway is aromatic compound metabolism; anthranilate degradation via hydroxylation; catechol from anthranilate: step 1/1. Component of anthranilate dioxygenase multicomponent enzyme system which catalyzes the incorporation of both atoms of molecular oxygen into anthranilate to form catechol. The protein is Anthranilate 1,2-dioxygenase large subunit of Acinetobacter baylyi (strain ATCC 33305 / BD413 / ADP1).